The primary structure comprises 442 residues: Proline--tRNA ligase (442 aa).

Belongs to the class-II aminoacyl-tRNA synthetase family. ProS type 2 subfamily. In terms of assembly, homodimer.

The protein localises to the cytoplasm. The catalysed reaction is tRNA(Pro) + L-proline + ATP = L-prolyl-tRNA(Pro) + AMP + diphosphate. In terms of biological role, catalyzes the attachment of proline to tRNA(Pro) in a two-step reaction: proline is first activated by ATP to form Pro-AMP and then transferred to the acceptor end of tRNA(Pro). The sequence is that of Proline--tRNA ligase from Brucella anthropi (strain ATCC 49188 / DSM 6882 / CCUG 24695 / JCM 21032 / LMG 3331 / NBRC 15819 / NCTC 12168 / Alc 37) (Ochrobactrum anthropi).